The primary structure comprises 517 residues: Putative transporter C543.05c (517 aa).

A run of 11 helical transmembrane segments spans residues 68 to 88, 93 to 113, 121 to 141, 155 to 175, 186 to 206, 217 to 237, 269 to 289, 311 to 331, 377 to 397, 403 to 423, and 449 to 471; these read SFGV…FALL, LCIV…YDIM, FPFL…IAIA, CEIF…QVLC, FLSI…DTVG, ILLL…FQHI, IPVG…ILFY, GFHW…ILGI, SNFI…LLVL, CVLA…NGIT, and RVVW…ITQV.

The protein belongs to the anion exchanger (TC 2.A.31) family.

It is found in the vacuole membrane. The chain is Putative transporter C543.05c from Schizosaccharomyces pombe (strain 972 / ATCC 24843) (Fission yeast).